We begin with the raw amino-acid sequence, 133 residues long: ATP synthase epsilon chain, chloroplastic (133 aa).

The protein belongs to the ATPase epsilon chain family. As to quaternary structure, F-type ATPases have 2 components, CF(1) - the catalytic core - and CF(0) - the membrane proton channel. CF(1) has five subunits: alpha(3), beta(3), gamma(1), delta(1), epsilon(1). CF(0) has three main subunits: a, b and c.

It localises to the plastid. Its subcellular location is the chloroplast thylakoid membrane. Functionally, produces ATP from ADP in the presence of a proton gradient across the membrane. This Eucalyptus globulus subsp. globulus (Tasmanian blue gum) protein is ATP synthase epsilon chain, chloroplastic.